The following is a 354-amino-acid chain: Probable alcohol acetyltransferase (354 aa).

Catalysis depends on charge relay system residues Ser-124 and His-293.

The protein belongs to the AB hydrolase superfamily.

In terms of biological role, probable alcohol acetyltransferase that uses acetyl-CoA to synthesize acetate esters from various alcohols. Not involved in the synthesis of ethyl acetate. This is Probable alcohol acetyltransferase (EAT2) from Cyberlindnera jadinii (strain ATCC 18201 / CBS 1600 / BCRC 20928 / JCM 3617 / NBRC 0987 / NRRL Y-1542) (Torula yeast).